The sequence spans 184 residues: Adenine phosphoribosyltransferase (184 aa).

It belongs to the purine/pyrimidine phosphoribosyltransferase family. Homodimer.

It is found in the cytoplasm. It carries out the reaction AMP + diphosphate = 5-phospho-alpha-D-ribose 1-diphosphate + adenine. It participates in purine metabolism; AMP biosynthesis via salvage pathway; AMP from adenine: step 1/1. Its function is as follows. Catalyzes a salvage reaction resulting in the formation of AMP, that is energically less costly than de novo synthesis. The sequence is that of Adenine phosphoribosyltransferase from Acidovorax sp. (strain JS42).